A 183-amino-acid chain; its full sequence is Crossover junction endodeoxyribonuclease RuvC (183 aa).

Catalysis depends on residues aspartate 16, glutamate 75, and aspartate 147. The Mg(2+) site is built by aspartate 16, glutamate 75, and aspartate 147.

This sequence belongs to the RuvC family. In terms of assembly, homodimer which binds Holliday junction (HJ) DNA. The HJ becomes 2-fold symmetrical on binding to RuvC with unstacked arms; it has a different conformation from HJ DNA in complex with RuvA. In the full resolvosome a probable DNA-RuvA(4)-RuvB(12)-RuvC(2) complex forms which resolves the HJ. It depends on Mg(2+) as a cofactor.

It localises to the cytoplasm. It carries out the reaction Endonucleolytic cleavage at a junction such as a reciprocal single-stranded crossover between two homologous DNA duplexes (Holliday junction).. Its function is as follows. The RuvA-RuvB-RuvC complex processes Holliday junction (HJ) DNA during genetic recombination and DNA repair. Endonuclease that resolves HJ intermediates. Cleaves cruciform DNA by making single-stranded nicks across the HJ at symmetrical positions within the homologous arms, yielding a 5'-phosphate and a 3'-hydroxyl group; requires a central core of homology in the junction. The consensus cleavage sequence is 5'-(A/T)TT(C/G)-3'. Cleavage occurs on the 3'-side of the TT dinucleotide at the point of strand exchange. HJ branch migration catalyzed by RuvA-RuvB allows RuvC to scan DNA until it finds its consensus sequence, where it cleaves and resolves the cruciform DNA. The protein is Crossover junction endodeoxyribonuclease RuvC of Azoarcus sp. (strain BH72).